The sequence spans 375 residues: Platelet-derived growth factor receptor-like protein (375 aa).

The first 17 residues, 1-17 (MKVWLLLGLLLLHEALG), serve as a signal peptide directing secretion. Residues 19–63 (VAGQHPPKNKRPKEQGENRIKPTNKKAKPKIPKIKDRDTADSAPK) are disordered. A compositionally biased stretch (basic residues) spans 40–50 (PTNKKAKPKIP). Residues 62–159 (PKSQSIMMQA…GYICRRDEAR (98 aa)) form the Ig-like C2-type 1 domain. Cysteine 96 and cysteine 143 are disulfide-bonded. Asparagine 219 is a glycosylation site (N-linked (GlcNAc...) asparagine). The region spanning 272 to 375 (PSTTILASSN…TTVATTVEFS (104 aa)) is the Ig-like C2-type 2 domain. Cysteine 293 and cysteine 357 are oxidised to a cystine.

In terms of assembly, forms a complex composed of PDGFRL, TNK2 and GRB2.

Its subcellular location is the secreted. The protein is Platelet-derived growth factor receptor-like protein (Pdgfrl) of Rattus norvegicus (Rat).